A 28-amino-acid polypeptide reads, in one-letter code: Sarcolamban A (28 aa).

The helical transmembrane segment at 7-27 threads the bilayer; sequence LFTTFGILAILLFFLYLIYAV.

In terms of assembly, interacts with SERCA. As to expression, strongly expressed in embryonic and larval somatic muscles and postembryonic heart.

It is found in the sarcoplasmic reticulum membrane. Its subcellular location is the cell membrane. The protein resides in the sarcolemma. The protein localises to the T-tubule. Its function is as follows. Plays an essential role in the regulation of calcium transport at the sarcoplasmic reticulum (SR), which is secondarily required for regular muscle contraction. The polypeptide is Sarcolamban A (Drosophila melanogaster (Fruit fly)).